A 120-amino-acid polypeptide reads, in one-letter code: NAD(P)H-quinone oxidoreductase subunit 3, chloroplastic (120 aa).

The next 3 helical transmembrane spans lie at 9–29 (IFWA…LISG), 64–84 (MFAL…PWAM), and 88–108 (VLGV…IVGS).

It belongs to the complex I subunit 3 family. NDH is composed of at least 16 different subunits, 5 of which are encoded in the nucleus.

It localises to the plastid. The protein resides in the chloroplast thylakoid membrane. It carries out the reaction a plastoquinone + NADH + (n+1) H(+)(in) = a plastoquinol + NAD(+) + n H(+)(out). The catalysed reaction is a plastoquinone + NADPH + (n+1) H(+)(in) = a plastoquinol + NADP(+) + n H(+)(out). Its function is as follows. NDH shuttles electrons from NAD(P)H:plastoquinone, via FMN and iron-sulfur (Fe-S) centers, to quinones in the photosynthetic chain and possibly in a chloroplast respiratory chain. The immediate electron acceptor for the enzyme in this species is believed to be plastoquinone. Couples the redox reaction to proton translocation, and thus conserves the redox energy in a proton gradient. The chain is NAD(P)H-quinone oxidoreductase subunit 3, chloroplastic from Gossypium barbadense (Sea Island cotton).